A 372-amino-acid polypeptide reads, in one-letter code: Histidinol-phosphate aminotransferase (372 aa).

Position 230 is an N6-(pyridoxal phosphate)lysine (K230).

The protein belongs to the class-II pyridoxal-phosphate-dependent aminotransferase family. Histidinol-phosphate aminotransferase subfamily. Homodimer. Requires pyridoxal 5'-phosphate as cofactor.

It carries out the reaction L-histidinol phosphate + 2-oxoglutarate = 3-(imidazol-4-yl)-2-oxopropyl phosphate + L-glutamate. The protein operates within amino-acid biosynthesis; L-histidine biosynthesis; L-histidine from 5-phospho-alpha-D-ribose 1-diphosphate: step 7/9. The chain is Histidinol-phosphate aminotransferase from Paenarthrobacter aurescens (strain TC1).